Consider the following 294-residue polypeptide: Nucleotide-binding protein CLJ_B3680 (294 aa).

Glycine 8–threonine 15 is a binding site for ATP. Residue aspartate 59–glycine 62 coordinates GTP.

The protein belongs to the RapZ-like family.

Its function is as follows. Displays ATPase and GTPase activities. This chain is Nucleotide-binding protein CLJ_B3680, found in Clostridium botulinum (strain 657 / Type Ba4).